Here is a 330-residue protein sequence, read N- to C-terminus: Probable xanthine dehydrogenase subunit A (330 aa).

In terms of assembly, could be composed of four subunits: PucA, PucC, PucD and PucE.

It carries out the reaction xanthine + NAD(+) + H2O = urate + NADH + H(+). The enzyme catalyses hypoxanthine + NAD(+) + H2O = xanthine + NADH + H(+). It functions in the pathway purine metabolism; hypoxanthine degradation; urate from hypoxanthine: step 1/2. Its pathway is purine metabolism; hypoxanthine degradation; urate from hypoxanthine: step 2/2. Its function is as follows. Oxidizes hypoxanthine and xanthine to uric acid. PucA subunit could exert a molybdenum cofactor recruiting function. The chain is Probable xanthine dehydrogenase subunit A (pucA) from Bacillus subtilis (strain 168).